Reading from the N-terminus, the 416-residue chain is Glutamyl-tRNA reductase (416 aa).

Substrate contacts are provided by residues 49–52 (TCNR), Ser-105, 110–112 (EPQ), and Gln-116. Catalysis depends on Cys-50, which acts as the Nucleophile. Residue 185-190 (GAGETI) participates in NADP(+) binding.

Belongs to the glutamyl-tRNA reductase family. As to quaternary structure, homodimer.

It catalyses the reaction (S)-4-amino-5-oxopentanoate + tRNA(Glu) + NADP(+) = L-glutamyl-tRNA(Glu) + NADPH + H(+). Its pathway is porphyrin-containing compound metabolism; protoporphyrin-IX biosynthesis; 5-aminolevulinate from L-glutamyl-tRNA(Glu): step 1/2. Its function is as follows. Catalyzes the NADPH-dependent reduction of glutamyl-tRNA(Glu) to glutamate 1-semialdehyde (GSA). The chain is Glutamyl-tRNA reductase from Shewanella baltica (strain OS185).